The following is a 443-amino-acid chain: 3-isopropylmalate dehydratase large subunit (443 aa).

[4Fe-4S] cluster contacts are provided by cysteine 347, cysteine 407, and cysteine 410.

The protein belongs to the aconitase/IPM isomerase family. LeuC type 1 subfamily. In terms of assembly, heterodimer of LeuC and LeuD. The cofactor is [4Fe-4S] cluster.

It catalyses the reaction (2R,3S)-3-isopropylmalate = (2S)-2-isopropylmalate. Its pathway is amino-acid biosynthesis; L-leucine biosynthesis; L-leucine from 3-methyl-2-oxobutanoate: step 2/4. Its function is as follows. Catalyzes the isomerization between 2-isopropylmalate and 3-isopropylmalate, via the formation of 2-isopropylmaleate. This Buchnera aphidicola subsp. Uroleucon sonchi protein is 3-isopropylmalate dehydratase large subunit.